The following is a 152-amino-acid chain: Aspartate carbamoyltransferase regulatory chain (152 aa).

Positions 108, 113, 136, and 139 each coordinate Zn(2+).

This sequence belongs to the PyrI family. As to quaternary structure, contains catalytic and regulatory chains. It depends on Zn(2+) as a cofactor.

In terms of biological role, involved in allosteric regulation of aspartate carbamoyltransferase. This chain is Aspartate carbamoyltransferase regulatory chain, found in Pyrococcus furiosus (strain ATCC 43587 / DSM 3638 / JCM 8422 / Vc1).